Reading from the N-terminus, the 238-residue chain is 14-3-3 protein 2 (238 aa).

It belongs to the 14-3-3 family.

Its function is as follows. Probable adapter protein. The polypeptide is 14-3-3 protein 2 (Entamoeba histolytica (strain ATCC 30459 / HM-1:IMSS / ABRM)).